Reading from the N-terminus, the 496-residue chain is Maturase K (496 aa).

Belongs to the intron maturase 2 family. MatK subfamily.

The protein resides in the plastid. The protein localises to the chloroplast. In terms of biological role, usually encoded in the trnK tRNA gene intron. Probably assists in splicing its own and other chloroplast group II introns. The chain is Maturase K from Paeonia suffruticosa (Tree peony).